Here is a 949-residue protein sequence, read N- to C-terminus: Protocadherin alpha-11 (949 aa).

The first 29 residues, Met-1–Gly-29, serve as a signal peptide directing secretion. 6 consecutive Cadherin domains span residues Gln-30–Phe-133, Ala-157–Phe-242, Asp-243–Val-349, Ala-350–Phe-454, Ala-455–Leu-564, and Val-580–Ala-677. Over Gln-30–Asn-696 the chain is Extracellular. Residues Asn-265 and Asn-304 are each glycosylated (N-linked (GlcNAc...) asparagine). An N-linked (GlcNAc...) asparagine glycan is attached at Asn-547. A helical transmembrane segment spans residues Val-697–Tyr-717. The Cytoplasmic segment spans residues Thr-718–Gln-949. 2 PXXP repeats span residues Pro-733–Pro-736 and Pro-773–Pro-776. A 6 X 4 AA repeats of P-X-X-P region spans residues Pro-733–Pro-893. Disordered regions lie at residues Arg-753 to Tyr-807, Ile-826 to Gly-858, and Tyr-870 to Ile-889. Positions Asn-780–Glu-789 are enriched in basic and acidic residues. PXXP repeat units follow at residues Pro-795–Pro-798, Pro-831–Pro-834, Pro-872–Pro-875, and Pro-890–Pro-893. A disordered region spans residues Gln-900 to Gln-949. A compositionally biased stretch (basic and acidic residues) spans Asp-908–Lys-922.

The protein resides in the cell membrane. Its function is as follows. Potential calcium-dependent cell-adhesion protein. May be involved in the establishment and maintenance of specific neuronal connections in the brain. The polypeptide is Protocadherin alpha-11 (PCDHA11) (Pan troglodytes (Chimpanzee)).